We begin with the raw amino-acid sequence, 476 residues long: G-patch domain and KOW motifs-containing protein (476 aa).

The interval 1–96 is disordered; sequence MADSKEGVLP…PGPSTDTGAL (96 aa). Residue A2 is modified to N-acetylalanine. Residue K5 forms a Glycyl lysine isopeptide (Lys-Gly) (interchain with G-Cter in SUMO2) linkage. Over residues 13-26 the composition is skewed to polar residues; that stretch reads AASTAPISFGFTRT. S27 carries the phosphoserine; by PKA modification. A phosphoserine mark is found at S35 and S42. The segment covering 43-58 has biased composition (basic and acidic residues); sequence PEEKDFLKTVEGRELQ. S115 is subject to Phosphoserine. Residues 164-210 form the G-patch domain; sequence VEAYGLAMLRGMGWKPGEGIGRTFNQVVKPRVNSLRPKGLGLGANLT. A disordered region spans residues 203–244; the sequence is LGLGANLTEAQALTPTGPSRMPRPDEEQEKDKEDQPQGLVPG. Polar residues predominate over residues 210–219; that stretch reads TEAQALTPTG. Phosphothreonine is present on T216. Over residues 224–237 the composition is skewed to basic and acidic residues; that stretch reads PRPDEEQEKDKEDQ. The 28-residue stretch at 240-267 folds into the KOW 1 domain; the sequence is GLVPGGAVVVLSGPHRGLYGKVEGLDPD. Residue T316 is modified to Phosphothreonine; by PKA. The tract at residues 327-353 is disordered; sequence DNSERKRKHLPDRQDGPAAKSEKAAPR. Over residues 337–351 the composition is skewed to basic and acidic residues; sequence PDRQDGPAAKSEKAA. A KOW 2 domain is found at 415–442; the sequence is PKAEGDRVMVVLGPQTGRVGHLLSRDRA. S471 carries the phosphoserine modification. A Phosphothreonine modification is found at T473.

This sequence belongs to the MOS2 family. In terms of assembly, component of the minor spliceosome, which splices U12-type introns. Interacts with PRKX. Interacts with DHX16. Interacts with PRKACB. Phosphorylation regulates its ability to bind RNA.

Its subcellular location is the nucleus. Its function is as follows. RNA-binding protein involved in pre-mRNA splicing. As a component of the minor spliceosome, involved in the splicing of U12-type introns in pre-mRNAs. This is G-patch domain and KOW motifs-containing protein (GPKOW) from Homo sapiens (Human).